Consider the following 915-residue polypeptide: Translation initiation factor IF-2 (915 aa).

Residues 83 to 94 (QSRRAVEKEQIL) show a composition bias toward basic and acidic residues. Disordered regions lie at residues 83-177 (QSRR…PEPP), 216-280 (EADR…KPAV), and 293-328 (ISGM…LLRE). 2 stretches are compositionally biased toward low complexity: residues 111 to 129 (VRAA…EAPS) and 137 to 164 (APAT…LSAP). Pro residues predominate over residues 165 to 177 (LPEPVPEPVPEPP). The span at 293–305 (ISGMDDSSGTGSR) shows a compositional bias: polar residues. A compositionally biased stretch (basic and acidic residues) spans 314-328 (MEREREQEEADLLRE). The 171-residue stretch at 412–582 (TRPPVVTIMG…LTEAEMRELK (171 aa)) folds into the tr-type G domain. The segment at 421-428 (GHVDHGKT) is G1. Position 421 to 428 (421 to 428 (GHVDHGKT)) interacts with GTP. The interval 446–450 (GITQH) is G2. A G3 region spans residues 468–471 (DTPG). GTP-binding positions include 468–472 (DTPGH) and 522–525 (NKMD). A G4 region spans residues 522 to 525 (NKMD). The G5 stretch occupies residues 558-560 (SAK).

It belongs to the TRAFAC class translation factor GTPase superfamily. Classic translation factor GTPase family. IF-2 subfamily.

The protein localises to the cytoplasm. One of the essential components for the initiation of protein synthesis. Protects formylmethionyl-tRNA from spontaneous hydrolysis and promotes its binding to the 30S ribosomal subunits. Also involved in the hydrolysis of GTP during the formation of the 70S ribosomal complex. This is Translation initiation factor IF-2 from Chlorobium luteolum (strain DSM 273 / BCRC 81028 / 2530) (Pelodictyon luteolum).